The chain runs to 280 residues: 3-methyl-2-oxobutanoate hydroxymethyltransferase (280 aa).

2 residues coordinate Mg(2+): Asp-49 and Asp-88. 3-methyl-2-oxobutanoate is bound by residues 49-50, Asp-88, and Lys-118; that span reads DS. Glu-120 contributes to the Mg(2+) binding site. Glu-186 acts as the Proton acceptor in catalysis.

This sequence belongs to the PanB family. Homodecamer; pentamer of dimers. Requires Mg(2+) as cofactor.

It localises to the cytoplasm. It carries out the reaction 3-methyl-2-oxobutanoate + (6R)-5,10-methylene-5,6,7,8-tetrahydrofolate + H2O = 2-dehydropantoate + (6S)-5,6,7,8-tetrahydrofolate. The protein operates within cofactor biosynthesis; (R)-pantothenate biosynthesis; (R)-pantoate from 3-methyl-2-oxobutanoate: step 1/2. Catalyzes the reversible reaction in which hydroxymethyl group from 5,10-methylenetetrahydrofolate is transferred onto alpha-ketoisovalerate to form ketopantoate. The polypeptide is 3-methyl-2-oxobutanoate hydroxymethyltransferase (Ruegeria sp. (strain TM1040) (Silicibacter sp.)).